The chain runs to 179 residues: MIFYLHGFDATSPGNHEKMRQLQFIDPDVRLVSYSTLHPKHDMQHLLKEVAKQMKHSDDPAPLMVGVGLGAYWAERIGFLNGLKSVLINPNLHPEENMQGKIDRPEEYADIANKCVSQFREKNTHKAMCIFSVNDEMFDNQQLASELSAYYSIDWDDVQPHKFPQLAAHLPKIKAFKLA.

This sequence belongs to the UPF0227 family.

The sequence is that of UPF0227 protein Sbal_2415 from Shewanella baltica (strain OS155 / ATCC BAA-1091).